A 195-amino-acid chain; its full sequence is Probable nicotinate-nucleotide adenylyltransferase (195 aa).

The protein belongs to the NadD family.

It catalyses the reaction nicotinate beta-D-ribonucleotide + ATP + H(+) = deamido-NAD(+) + diphosphate. It participates in cofactor biosynthesis; NAD(+) biosynthesis; deamido-NAD(+) from nicotinate D-ribonucleotide: step 1/1. Functionally, catalyzes the reversible adenylation of nicotinate mononucleotide (NaMN) to nicotinic acid adenine dinucleotide (NaAD). The polypeptide is Probable nicotinate-nucleotide adenylyltransferase (Chlorobaculum tepidum (strain ATCC 49652 / DSM 12025 / NBRC 103806 / TLS) (Chlorobium tepidum)).